The sequence spans 267 residues: Phosphate import ATP-binding protein PstB (267 aa).

An ABC transporter domain is found at 21 to 262 (IAIRNLEFYY…PSKQQTEDYI (242 aa)). ATP is bound at residue 53 to 60 (GPSGCGKS).

The protein belongs to the ABC transporter superfamily. Phosphate importer (TC 3.A.1.7) family. In terms of assembly, the complex is composed of two ATP-binding proteins (PstB), two transmembrane proteins (PstC and PstA) and a solute-binding protein (PstS).

The protein resides in the cell inner membrane. The enzyme catalyses phosphate(out) + ATP + H2O = ADP + 2 phosphate(in) + H(+). Functionally, part of the ABC transporter complex PstSACB involved in phosphate import. Responsible for energy coupling to the transport system. This is Phosphate import ATP-binding protein PstB from Xylella fastidiosa (strain 9a5c).